The primary structure comprises 394 residues: DNA replication and repair protein RecF (394 aa).

30–37 (GRNGFGKT) provides a ligand contact to ATP.

The protein belongs to the RecF family.

It localises to the cytoplasm. Functionally, the RecF protein is involved in DNA metabolism; it is required for DNA replication and normal SOS inducibility. RecF binds preferentially to single-stranded, linear DNA. It also seems to bind ATP. This Corynebacterium glutamicum (strain ATCC 13032 / DSM 20300 / JCM 1318 / BCRC 11384 / CCUG 27702 / LMG 3730 / NBRC 12168 / NCIMB 10025 / NRRL B-2784 / 534) protein is DNA replication and repair protein RecF.